A 140-amino-acid chain; its full sequence is MIDIQGIKEALPHRYPMLLVDRVLEVSEDTIVAIKNVTINEPFFNGHFPQYPVMPGVVIMEALAQTAGVLELSKPENKGKLVFYAGMDKVKFKKQVVPGDQLVMTATFVKRRGTIAVVEAKAEVDGKLAASGTLTFAIGN.

His-47 is a catalytic residue.

This sequence belongs to the thioester dehydratase family. FabZ subfamily.

The protein localises to the cytoplasm. It carries out the reaction a (3R)-hydroxyacyl-[ACP] = a (2E)-enoyl-[ACP] + H2O. In terms of biological role, involved in unsaturated fatty acids biosynthesis. Catalyzes the dehydration of short chain beta-hydroxyacyl-ACPs and long chain saturated and unsaturated beta-hydroxyacyl-ACPs. The chain is 3-hydroxyacyl-[acyl-carrier-protein] dehydratase FabZ from Streptococcus pneumoniae serotype 4 (strain ATCC BAA-334 / TIGR4).